A 358-amino-acid chain; its full sequence is DNA integrity scanning protein DisA (358 aa).

One can recognise a DAC domain in the interval 6–144; that stretch reads RPTLREAVAR…RGERHVLTDS (139 aa). Residues glycine 73, leucine 91, and 104–108 contribute to the ATP site; that span reads TRHRS.

The protein belongs to the DisA family. Homooctamer. The cofactor is Mg(2+).

It carries out the reaction 2 ATP = 3',3'-c-di-AMP + 2 diphosphate. Its function is as follows. Participates in a DNA-damage check-point. DisA forms globular foci that rapidly scan along the chromosomes searching for lesions. In terms of biological role, also has diadenylate cyclase activity, catalyzing the condensation of 2 ATP molecules into cyclic di-AMP (c-di-AMP). c-di-AMP likely acts as a signaling molecule that may couple DNA integrity with a cellular process. The protein is DNA integrity scanning protein DisA of Mycobacterium bovis (strain ATCC BAA-935 / AF2122/97).